We begin with the raw amino-acid sequence, 1128 residues long: Transient receptor potential-gamma protein (1128 aa).

At 1 to 325 (MMEEENTIRP…MALQAVDIIR (325 aa)) the chain is on the cytoplasmic side. 2 ANK repeats span residues 57-86 (LGRTALLMAIDNENLEMVELLINYNVDTKD) and 131-160 (PDITPLILAAHRDNYEIIKILLDRGAVLPM). A helical transmembrane segment spans residues 326-346 (IGIMFPIFSLAYILAPYSSIG). Residues 347–403 (QTMRKPFIKFICHSASYFTFLFLLMLASQRIETFIGGWFFADSSGMLNTMEELPTKR) lie on the Extracellular side of the membrane. The helical transmembrane segment at 404-424 (GAKPTFIEWLILAWVSGLIWS) threads the bilayer. The Cytoplasmic portion of the chain corresponds to 425-444 (EVKQLWDVGLQEYLNDMWNV). The helical transmembrane segment at 445–465 (IDFVTNSLYVATVALRVVSFF) threads the bilayer. Residues 466 to 492 (QVQKEMIYNSHATDLPRERWDAWDPML) are Extracellular-facing. A helical membrane pass occupies residues 493-513 (ISEGLFSAANIFSSLKLVYIF). Residues 514-535 (SVNPHLGPLQVSLSRMVMDIMK) are Cytoplasmic-facing. The chain crosses the membrane as a helical span at residues 536–556 (FFFLYVLVLFAFGSGLNQLLW). At 557-629 (YYADLEKKRC…GIKIFTRFWG (73 aa)) the chain is on the extracellular side. A helical transmembrane segment spans residues 630 to 650 (MLMFGTYSVINIVVLLNLLIA). Topologically, residues 651–1128 (MMNHSYQLIS…SCVSTTGAIG (478 aa)) are cytoplasmic. Disordered stretches follow at residues 865–898 (RQQSQAGSGGGGSESPTTPTAPQGTQGAAMTASS) and 1064–1111 (AAEA…SVNS). Positions 878–893 (ESPTTPTAPQGTQGAA) are enriched in low complexity. Residues 1085–1111 (TQSQHDSVETNSTFTLSIDPSNTSVNS) show a composition bias toward polar residues.

The protein belongs to the transient receptor (TC 1.A.4) family. STrpC subfamily. In terms of assembly, interacts preferentially with trpl and interacts to a lower extent with trp. In terms of tissue distribution, expressed predominantly in the rhabdomeres of photoreceptor cells.

Its subcellular location is the cell projection. The protein resides in the rhabdomere membrane. Functionally, a light-sensitive calcium channel that is required for inositide-mediated Ca(2+) entry in the retina during phospholipase C (PLC)-mediated phototransduction. Forms a regulated cation channel when heteromultimerized with trpl. The sequence is that of Transient receptor potential-gamma protein (Trpgamma) from Drosophila melanogaster (Fruit fly).